We begin with the raw amino-acid sequence, 130 residues long: Small ribosomal subunit protein uS8A (130 aa).

It belongs to the universal ribosomal protein uS8 family. Component of the small ribosomal subunit (SSU). Mature ribosomes consist of a small (40S) and a large (60S) subunit. The 40S subunit contains about 32 different proteins and 1 molecule of RNA (18S). The 60S subunit contains 45 different proteins and 3 molecules of RNA (25S, 5.8S and 5S).

It localises to the cytoplasm. In terms of biological role, component of the ribosome, a large ribonucleoprotein complex responsible for the synthesis of proteins in the cell. The small ribosomal subunit (SSU) binds messenger RNAs (mRNAs) and translates the encoded message by selecting cognate aminoacyl-transfer RNA (tRNA) molecules. The large subunit (LSU) contains the ribosomal catalytic site termed the peptidyl transferase center (PTC), which catalyzes the formation of peptide bonds, thereby polymerizing the amino acids delivered by tRNAs into a polypeptide chain. The nascent polypeptides leave the ribosome through a tunnel in the LSU and interact with protein factors that function in enzymatic processing, targeting, and the membrane insertion of nascent chains at the exit of the ribosomal tunnel. In Candida albicans (strain SC5314 / ATCC MYA-2876) (Yeast), this protein is Small ribosomal subunit protein uS8A (RPS22A).